We begin with the raw amino-acid sequence, 184 residues long: Crossover junction endodeoxyribonuclease RuvC (184 aa).

Residues Asp-11, Glu-73, and Asp-147 contribute to the active site. Positions 11, 73, and 147 each coordinate Mg(2+).

The protein belongs to the RuvC family. In terms of assembly, homodimer which binds Holliday junction (HJ) DNA. The HJ becomes 2-fold symmetrical on binding to RuvC with unstacked arms; it has a different conformation from HJ DNA in complex with RuvA. In the full resolvosome a probable DNA-RuvA(4)-RuvB(12)-RuvC(2) complex forms which resolves the HJ. The cofactor is Mg(2+).

It is found in the cytoplasm. The catalysed reaction is Endonucleolytic cleavage at a junction such as a reciprocal single-stranded crossover between two homologous DNA duplexes (Holliday junction).. Functionally, the RuvA-RuvB-RuvC complex processes Holliday junction (HJ) DNA during genetic recombination and DNA repair. Endonuclease that resolves HJ intermediates. Cleaves cruciform DNA by making single-stranded nicks across the HJ at symmetrical positions within the homologous arms, yielding a 5'-phosphate and a 3'-hydroxyl group; requires a central core of homology in the junction. The consensus cleavage sequence is 5'-(A/T)TT(C/G)-3'. Cleavage occurs on the 3'-side of the TT dinucleotide at the point of strand exchange. HJ branch migration catalyzed by RuvA-RuvB allows RuvC to scan DNA until it finds its consensus sequence, where it cleaves and resolves the cruciform DNA. The polypeptide is Crossover junction endodeoxyribonuclease RuvC (Neisseria gonorrhoeae (strain ATCC 700825 / FA 1090)).